Reading from the N-terminus, the 215-residue chain is Small ribosomal subunit protein uS3 (215 aa).

One can recognise a KH type-2 domain in the interval 39–107; the sequence is VRQYLQKKLA…PVHINIEEIR (69 aa).

This sequence belongs to the universal ribosomal protein uS3 family. As to quaternary structure, part of the 30S ribosomal subunit. Forms a tight complex with proteins S10 and S14.

Binds the lower part of the 30S subunit head. Binds mRNA in the 70S ribosome, positioning it for translation. The polypeptide is Small ribosomal subunit protein uS3 (Nitrosomonas europaea (strain ATCC 19718 / CIP 103999 / KCTC 2705 / NBRC 14298)).